Reading from the N-terminus, the 304-residue chain is GTPase Era (304 aa).

The Era-type G domain occupies 9–176; it reads KSGFVSIIGR…LLEITKHLSE (168 aa). A G1 region spans residues 17 to 24; that stretch reads GRPNVGKS. Position 17–24 (17–24) interacts with GTP; sequence GRPNVGKS. The segment at 43 to 47 is G2; that stretch reads QTTRN. Residues 64–67 form a G3 region; sequence DTPG. GTP-binding positions include 64–68 and 126–129; these read DTPGI and NKID. The tract at residues 126-129 is G4; that stretch reads NKID. The tract at residues 155-157 is G5; it reads VSA. The 87-residue stretch at 199–285 folds into the KH type-2 domain; sequence IREKVLHLTR…FLELWVKVQK (87 aa).

This sequence belongs to the TRAFAC class TrmE-Era-EngA-EngB-Septin-like GTPase superfamily. Era GTPase family. In terms of assembly, monomer.

The protein resides in the cytoplasm. The protein localises to the cell membrane. Functionally, an essential GTPase that binds both GDP and GTP, with rapid nucleotide exchange. Plays a role in 16S rRNA processing and 30S ribosomal subunit biogenesis and possibly also in cell cycle regulation and energy metabolism. This Halalkalibacterium halodurans (strain ATCC BAA-125 / DSM 18197 / FERM 7344 / JCM 9153 / C-125) (Bacillus halodurans) protein is GTPase Era.